The following is a 216-amino-acid chain: GTP cyclohydrolase 1 (216 aa).

Cysteine 109, histidine 112, and cysteine 180 together coordinate Zn(2+).

It belongs to the GTP cyclohydrolase I family. In terms of assembly, homomer.

It carries out the reaction GTP + H2O = 7,8-dihydroneopterin 3'-triphosphate + formate + H(+). The protein operates within cofactor biosynthesis; 7,8-dihydroneopterin triphosphate biosynthesis; 7,8-dihydroneopterin triphosphate from GTP: step 1/1. The chain is GTP cyclohydrolase 1 from Tolumonas auensis (strain DSM 9187 / NBRC 110442 / TA 4).